The sequence spans 428 residues: Flotillin-2 (428 aa).

A lipid anchor (N-myristoyl glycine) is attached at Gly-2. Cys-4 carries S-palmitoyl cysteine; by ZDHHC5 lipidation. Cys-19 is lipidated: S-palmitoyl cysteine. A lipid anchor (S-palmitoyl cysteine; by ZDHHC5) is attached at Cys-20. Ser-405 carries the phosphoserine modification.

This sequence belongs to the band 7/mec-2 family. Flotillin subfamily. As to quaternary structure, heterooligomeric complex of flotillin-1 and flotillin-2 and caveolin-1 and caveolin-2. Interacts with ECPAS. Post-translationally, ZDHHC5-catalyzed palmitoylation predominantly occurs at Cys-4. ZDHHC5-catalyzed palmitoylation may be required for the formation of higher-order complexes and for neurite outgrowth in cultured neural stem cells. As to expression, in skin, expressed in epidermis and epidermal appendages but not in dermis. Expressed in all layers of the epidermis except the basal layer. In hair follicles, expressed in the suprabasal layer but not the basal layer. Also expressed in melanoma and carcinoma cell lines, fibroblasts and foreskin melanocytes.

Its subcellular location is the cell membrane. The protein localises to the membrane. The protein resides in the caveola. It localises to the endosome. In terms of biological role, may act as a scaffolding protein within caveolar membranes, functionally participating in formation of caveolae or caveolae-like vesicles. May be involved in epidermal cell adhesion and epidermal structure and function. The polypeptide is Flotillin-2 (FLOT2) (Homo sapiens (Human)).